Consider the following 804-residue polypeptide: MPTGDPSSRTPPSPDADSVPILPLRNSVLFPMSVVPINVGRPRSVRLVEDLLGRERALVGVISQRSPDVDEPTFKELYSVGTVARVVKVIRLGPNNYSVVLNGLGRFRVKSAFSLEPYMRARIERIPESLVRDVELEALGAGLREATREVLGLMPNLPRDTAGILDNVREPGALADLIASNFPQAQASVGDKQEILEAFDVKARVRLVLAMVGRQLEVLRVKKEISSMVQEEMGKSQREYILRQQMKSIKEELGEGGDDDEIEELRERIRRAKVPAEVDKVVRKQLSRLRSMAQQSAEFNVTKTYLEWIADLPWSKTTVDKLSVESVRRCLDEDHLGLEKVKKRIVEYSAIRQLRTDKKGPILLFIGPPGVGKTSLGKSIARSMGRRYERIALGGVRDEAEIRGHRRTYVGALPGRILQALKKAGTKNPVLVLDEVDKMGVDLRGDPAAALLEVLDPEQNSTFQDHYLDLPFDLSQVMFLATANNWDGIPGPLVDRMEVIEVPGYTRTDKLGIAREFLVPKQLSAHGLTDERLEFTEPGIEAVVDHYTREAGVRGLERQIAAVCRATAVKVAEGNDVREVATPEHVEQVLGPHKHRPEIAERTLQPGVATGLAWTPAGGEILFIEATKMPGKGNVVLTGNMRNVMQESASTAVSFVRSKADRLHLDPEWLKEIDLHVHIPQHGTPKDGPSAGVTMFAAVASLLLGAPVRSDVAMTGEISLRGRVMPVGGVKEKLLAAHRAGIRHVLIPAKNRRDLEDVPQDVKDQIKITMVSSMEEILPLVLEPPRRAPAQSASPEELEEQAGV.

A Lon N-terminal domain is found at Val19–Leu216. Gly367–Thr374 contributes to the ATP binding site. The 182-residue stretch at Thr603–Pro784 folds into the Lon proteolytic domain. Catalysis depends on residues Ser690 and Lys733. Residues Leu782 to Val804 are disordered.

It belongs to the peptidase S16 family. As to quaternary structure, homohexamer. Organized in a ring with a central cavity.

The protein localises to the cytoplasm. It catalyses the reaction Hydrolysis of proteins in presence of ATP.. In terms of biological role, ATP-dependent serine protease that mediates the selective degradation of mutant and abnormal proteins as well as certain short-lived regulatory proteins. Required for cellular homeostasis and for survival from DNA damage and developmental changes induced by stress. Degrades polypeptides processively to yield small peptide fragments that are 5 to 10 amino acids long. Binds to DNA in a double-stranded, site-specific manner. This is Lon protease 2 from Sorangium cellulosum (strain So ce56) (Polyangium cellulosum (strain So ce56)).